We begin with the raw amino-acid sequence, 81 residues long: Photosystem I iron-sulfur center (81 aa).

2 4Fe-4S ferredoxin-type domains span residues 2-31 (SHSVKIYDTCIGCTQCVRACPLDVLEMVPW) and 37-68 (GQIASSPRTEDCVGCKRCETACPTDFLSIRVY). Positions 11, 14, 17, 21, 48, 51, 54, and 58 each coordinate [4Fe-4S] cluster.

As to quaternary structure, the cyanobacterial PSI reaction center is composed of one copy each of PsaA,B,C,D,E,F,I,J,K,L,M and X, and forms trimeric complexes. It depends on [4Fe-4S] cluster as a cofactor.

It is found in the cellular thylakoid membrane. It catalyses the reaction reduced [plastocyanin] + hnu + oxidized [2Fe-2S]-[ferredoxin] = oxidized [plastocyanin] + reduced [2Fe-2S]-[ferredoxin]. Its function is as follows. Apoprotein for the two 4Fe-4S centers FA and FB of photosystem I (PSI); essential for photochemical activity. FB is the terminal electron acceptor of PSI, donating electrons to ferredoxin. The C-terminus interacts with PsaA/B/D and helps assemble the protein into the PSI complex. Required for binding of PsaD and PsaE to PSI. PSI is a plastocyanin/cytochrome c6-ferredoxin oxidoreductase, converting photonic excitation into a charge separation, which transfers an electron from the donor P700 chlorophyll pair to the spectroscopically characterized acceptors A0, A1, FX, FA and FB in turn. This Synechococcus sp. (strain RCC307) protein is Photosystem I iron-sulfur center.